The sequence spans 64 residues: Putative antitoxin MJ0975 (64 aa).

It belongs to the UPF0165 family.

Possibly the antitoxin component of a type II toxin-antitoxin (TA) system. Its cognate toxin is VapC2 (Potential). This Methanocaldococcus jannaschii (strain ATCC 43067 / DSM 2661 / JAL-1 / JCM 10045 / NBRC 100440) (Methanococcus jannaschii) protein is Putative antitoxin MJ0975 (vapB2).